We begin with the raw amino-acid sequence, 84 residues long: MSDRIRILLGRVCNKKMNKSVVVSIERLIKHSTYEKFIKRTTKLHVHDPNNETNVGDLVEVQECRPISKTKSWILTSIIKKSNF.

The protein belongs to the universal ribosomal protein uS17 family. Part of the 30S ribosomal subunit.

Its function is as follows. One of the primary rRNA binding proteins, it binds specifically to the 5'-end of 16S ribosomal RNA. The sequence is that of Small ribosomal subunit protein uS17 from Blochmanniella pennsylvanica (strain BPEN).